A 308-amino-acid chain; its full sequence is UDP-N-acetylenolpyruvoylglucosamine reductase (308 aa).

Positions threonine 33–glycine 197 constitute an FAD-binding PCMH-type domain. Arginine 176 is a catalytic residue. The active-site Proton donor is serine 226. Glutamate 296 is a catalytic residue.

This sequence belongs to the MurB family. The cofactor is FAD.

It is found in the cytoplasm. It carries out the reaction UDP-N-acetyl-alpha-D-muramate + NADP(+) = UDP-N-acetyl-3-O-(1-carboxyvinyl)-alpha-D-glucosamine + NADPH + H(+). Its pathway is cell wall biogenesis; peptidoglycan biosynthesis. Its function is as follows. Cell wall formation. In Staphylococcus carnosus (strain TM300), this protein is UDP-N-acetylenolpyruvoylglucosamine reductase.